Here is a 319-residue protein sequence, read N- to C-terminus: ATP-dependent 6-phosphofructokinase (319 aa).

Glycine 11 provides a ligand contact to ATP. Arginine 21 to arginine 25 provides a ligand contact to ADP. Residues arginine 72–serine 73 and glycine 102–serine 105 each bind ATP. Aspartate 103 contributes to the Mg(2+) binding site. Threonine 125–aspartate 127 lines the substrate pocket. Residue aspartate 127 is the Proton acceptor of the active site. Arginine 154 provides a ligand contact to ADP. Residues arginine 162 and methionine 169 to arginine 171 each bind substrate. ADP is bound by residues glycine 185 to glutamate 187, arginine 211, and lysine 213 to histidine 215. Substrate-binding positions include glutamate 222, arginine 243, and histidine 249–arginine 252.

This sequence belongs to the phosphofructokinase type A (PFKA) family. ATP-dependent PFK group I subfamily. Prokaryotic clade 'B1' sub-subfamily. In terms of assembly, homotetramer. Mg(2+) serves as cofactor.

Its subcellular location is the cytoplasm. It catalyses the reaction beta-D-fructose 6-phosphate + ATP = beta-D-fructose 1,6-bisphosphate + ADP + H(+). It participates in carbohydrate degradation; glycolysis; D-glyceraldehyde 3-phosphate and glycerone phosphate from D-glucose: step 3/4. With respect to regulation, allosterically activated by ADP and other diphosphonucleosides, and allosterically inhibited by phosphoenolpyruvate. Its function is as follows. Catalyzes the phosphorylation of D-fructose 6-phosphate to fructose 1,6-bisphosphate by ATP, the first committing step of glycolysis. The sequence is that of ATP-dependent 6-phosphofructokinase from Brevibacillus brevis (strain 47 / JCM 6285 / NBRC 100599).